An 85-amino-acid chain; its full sequence is Protein WIR1B (85 aa).

Residues 1 to 12 are Cytoplasmic-facing; it reads MASHSAAGRRPT. The chain crosses the membrane as a helical span at residues 13–34; it reads ALVHIALFVAIAAVIINSSVCL. The Extracellular portion of the chain corresponds to 35-85; sequence GAAVHDAATSGTGALDPNVPAVPTPGGAGQPYTGRGCRTVYGCKPPAGSQP.

Its subcellular location is the membrane. In terms of biological role, associated with pathogen defense. The sequence is that of Protein WIR1B (WIR1B) from Triticum aestivum (Wheat).